The sequence spans 347 residues: Selenide, water dikinase (347 aa).

Residue cysteine 16 is part of the active site. ATP is bound by residues lysine 19 and 47-49 (TRD). Residue aspartate 50 participates in Mg(2+) binding. Residues aspartate 67, aspartate 90, and 138-140 (GHS) each bind ATP. Residue aspartate 90 coordinates Mg(2+). Aspartate 226 contacts Mg(2+).

Belongs to the selenophosphate synthase 1 family. Class I subfamily. As to quaternary structure, homodimer. Mg(2+) is required as a cofactor.

The catalysed reaction is hydrogenselenide + ATP + H2O = selenophosphate + AMP + phosphate + 2 H(+). Functionally, synthesizes selenophosphate from selenide and ATP. In Photorhabdus laumondii subsp. laumondii (strain DSM 15139 / CIP 105565 / TT01) (Photorhabdus luminescens subsp. laumondii), this protein is Selenide, water dikinase.